Reading from the N-terminus, the 183-residue chain is Beta-defensin 129 (183 aa).

The signal sequence occupies residues 1 to 19; sequence MKLLFPIFASLMLQYQVNT. 3 disulfide bridges follow: Cys27/Cys53, Cys34/Cys48, and Cys38/Cys54. The interval 141–183 is disordered; sequence TATSTKSNTKESRDSATASPPPAPPPPNILPTPSLELEEAEEQ. Residues 159–170 are compositionally biased toward pro residues; the sequence is SPPPAPPPPNIL.

Belongs to the beta-defensin family.

The protein localises to the secreted. In terms of biological role, has antibacterial activity. The polypeptide is Beta-defensin 129 (DEFB129) (Pan troglodytes (Chimpanzee)).